Reading from the N-terminus, the 316-residue chain is Succinoglycan biosynthesis protein ExoV (316 aa).

It participates in glycan metabolism; exopolysaccharide biosynthesis. This Rhizobium meliloti (strain 1021) (Ensifer meliloti) protein is Succinoglycan biosynthesis protein ExoV (exoV).